A 507-amino-acid chain; its full sequence is Ribonuclease Y (507 aa).

A helical membrane pass occupies residues 1 to 21 (MLWYIVAGAGGLLIGYLIANY). Residues 197 to 282 (TVSTVSLPSD…EMYEKAKQEV (86 aa)) enclose the KH domain. Residues 323–416 (VLNHSIEVAL…VAAADALSAA (94 aa)) form the HD domain.

The protein belongs to the RNase Y family.

Its subcellular location is the cell membrane. Its function is as follows. Endoribonuclease that initiates mRNA decay. In Thermotoga sp. (strain RQ2), this protein is Ribonuclease Y.